Here is a 165-residue protein sequence, read N- to C-terminus: Nucleotide-binding protein Syncc9902_1708 (165 aa).

The protein belongs to the YajQ family.

Nucleotide-binding protein. In Synechococcus sp. (strain CC9902), this protein is Nucleotide-binding protein Syncc9902_1708.